Consider the following 79-residue polypeptide: Eumenine mastoparan-OD (79 aa).

The first 24 residues, 1-24, serve as a signal peptide directing secretion; the sequence is MKQTIVIVLLAAVAMMACLQMVAA. AXPX repeat units lie at residues 24-27, 30-33, 44-47, 52-55, and 58-61; these read AEPL, AAPA, ASPI, ANPE, and ASPE. Residues 25 to 62 constitute a propeptide that is removed on maturation; that stretch reads EPLPEAAPAPSPLAEAEALASPIAEALANPEALASPEA. The residue at position 76 (Leu76) is a Leucine amide.

In terms of tissue distribution, expressed by the venom gland.

Its subcellular location is the secreted. The protein resides in the target cell membrane. Functionally, antimicrobial peptide with strong activity against the fungi C.albicans (MIC=6 uM) and B.cinerea (MIC=10 uM), and weaker activity against the Gram-negative bacterium E.coli (MIC=97 uM) and Gram-positive bacterium S.aureus (MIC=97 uM). Shows cytolytic activity against insect cell lines. Has potent hemolytic activity against ovine erythrocytes (80% at 50 uM), but has no hemolytic activity against human erythrocytes. In vivo, peptide injection in the vicinity of the head and thorax of lepidopteran larvae induces feeding disorder that lasts one or two days before recovering. This Orancistrocerus drewseni (Solitary wasp) protein is Eumenine mastoparan-OD.